The following is a 239-amino-acid chain: Small ribosomal subunit protein uS2 (239 aa).

This sequence belongs to the universal ribosomal protein uS2 family.

The chain is Small ribosomal subunit protein uS2 from Parasynechococcus marenigrum (strain WH8102).